A 310-amino-acid polypeptide reads, in one-letter code: Hydroxyacylglutathione hydrolase, mitochondrial (310 aa).

Zn(2+) is bound by residues His-104, His-106, Asp-108, His-109, His-160, and Asp-184. Substrate is bound by residues 193–195 (KFF), 223–225 (HEY), and 299–302 (RKEK). His-223 contacts Zn(2+).

It belongs to the metallo-beta-lactamase superfamily. Glyoxalase II family. Monomer. Zn(2+) serves as cofactor.

Its subcellular location is the mitochondrion matrix. It localises to the cytoplasm. It catalyses the reaction an S-(2-hydroxyacyl)glutathione + H2O = a 2-hydroxy carboxylate + glutathione + H(+). The enzyme catalyses (R)-S-lactoylglutathione + H2O = (R)-lactate + glutathione + H(+). In terms of biological role, thiolesterase that catalyzes the hydrolysis of S-D-lactoyl-glutathione to form glutathione and D-lactic acid. The polypeptide is Hydroxyacylglutathione hydrolase, mitochondrial (HAGH) (Gallus gallus (Chicken)).